The chain runs to 357 residues: MMKGAMGCPVAAVMEGSFSCTVANRFYQLLDDESDPFDNLREAERCWQQRKNLSKVVARRGDPGSRGCATRRELQKQRKQLGTPAPPPQPGQKQAPKQEECGGKDNSRAEKEHKTAWRPSFMEYLSSETESQAELTAQSLFRPTAKLNYERPRGCGRGRGGMQGRGRGGGINKSFDGFDQRGKREFGRQNDNDKIEMELTAPMEATAKTAKSPGVSEGELLNKVAEGKPREEVVQEMTLDEWKNLQQQNRPKHEFNIRRPESTVPSKAVVIHKSKYSDDIQKGELEDDYHIFRRAVNDITFQLDINFGSLPRPGCGSRGARGRGRGRQMEETGPQPEAMVQIVAPNPDDPEDFPALT.

3 disordered regions span residues 56 to 116 (VVAR…HKTA), 150 to 186 (ERPRGCGRGRGGMQGRGRGGGINKSFDGFDQRGKREF), and 313 to 357 (PGCG…PALT). A compositionally biased stretch (basic and acidic residues) spans 96-115 (PKQEECGGKDNSRAEKEHKT). Positions 155–171 (CGRGRGGMQGRGRGGGI) are enriched in gly residues. Positions 176–186 (DGFDQRGKREF) are enriched in basic and acidic residues. The span at 348–357 (DDPEDFPALT) shows a compositional bias: acidic residues.

It belongs to the SERBP1-HABP4 family. As to quaternary structure, associates with ribosomes; promoting ribosome stabilization. Interacts with EEF2/eEF2; promoting ribosome stabilization.

The protein resides in the nucleus. Its subcellular location is the cytoplasm. It is found in the stress granule. The protein localises to the sarcoplasm. It localises to the nuclear body. The protein resides in the nucleolus. Its subcellular location is the nucleus speckle. It is found in the cajal body. The protein localises to the gem. In terms of biological role, ribosome-binding protein that promotes ribosome hibernation, a process during which ribosomes are stabilized in an inactive state and preserved from proteasomal degradation. Acts via its association with EEF2/eEF2 factor at the A-site of the ribosome, promoting ribosome stabilization in an inactive state compatible with storage. Plays a key role in ribosome hibernation in the mature egg by promoting ribosome stabilization. Ribosomes, which are produced in large quantities during oogenesis, are stored and translationally repressed in the egg and early embryo. In Gallus gallus (Chicken), this protein is Intracellular hyaluronan-binding protein 4.